A 258-amino-acid chain; its full sequence is Cell division protein FtsQ (258 aa).

Residues 1-29 (MAKNAPAPRGARRKPVKKVGVPLRERVAT) are Cytoplasmic-facing. Residues 30–50 (AVPWMLVGSVAMVSLLAVIYL) traverse the membrane as a helical segment. At 51-258 (PAALDGYPIR…MAVTWREQQS (208 aa)) the chain is on the periplasmic side. The POTRA domain maps to 57–127 (YPIRKVGVDG…DTVVLTVEER (71 aa)).

This sequence belongs to the FtsQ/DivIB family. FtsQ subfamily. Part of a complex composed of FtsB, FtsL and FtsQ.

The protein localises to the cell inner membrane. Essential cell division protein. May link together the upstream cell division proteins, which are predominantly cytoplasmic, with the downstream cell division proteins, which are predominantly periplasmic. May control correct divisome assembly. The protein is Cell division protein FtsQ of Alcanivorax borkumensis (strain ATCC 700651 / DSM 11573 / NCIMB 13689 / SK2).